We begin with the raw amino-acid sequence, 124 residues long: Cytochrome c oxidase subunit 4 isoform 1, mitochondrial (124 aa).

Lysine 4 carries the post-translational modification N6-acetyllysine; alternate. An N6-succinyllysine; alternate modification is found at lysine 4. A phosphoserine mark is found at serine 31 and serine 33. Position 35 is an N6-acetyllysine; alternate (lysine 35). Lysine 35 is modified (N6-succinyllysine; alternate). The residue at position 42 (lysine 42) is an N6-acetyllysine.

Belongs to the cytochrome c oxidase IV family. As to quaternary structure, component of the cytochrome c oxidase (complex IV, CIV), a multisubunit enzyme composed of 14 subunits. The complex is composed of a catalytic core of 3 subunits MT-CO1, MT-CO2 and MT-CO3, encoded in the mitochondrial DNA, and 11 supernumerary subunits COX4I, COX5A, COX5B, COX6A, COX6B, COX6C, COX7A, COX7B, COX7C, COX8 and NDUFA4, which are encoded in the nuclear genome. The complex exists as a monomer or a dimer and forms supercomplexes (SCs) in the inner mitochondrial membrane with NADH-ubiquinone oxidoreductase (complex I, CI) and ubiquinol-cytochrome c oxidoreductase (cytochrome b-c1 complex, complex III, CIII), resulting in different assemblies (supercomplex SCI(1)III(2)IV(1) and megacomplex MCI(2)III(2)IV(2)). Interacts with PHB2; the interaction decreases in absence of SPHK2. Interacts with AFG1L. Interacts with ABCB7; this interaction allows the regulation of cellular iron homeostasis and cellular reactive oxygen species (ROS) levels in cardiomyocytes. Interacts with FLVCR2; this interaction occurs in the absence of heme and is disrupted upon heme binding. Interacts with IRGC.

It localises to the mitochondrion inner membrane. It participates in energy metabolism; oxidative phosphorylation. Its function is as follows. Component of the cytochrome c oxidase, the last enzyme in the mitochondrial electron transport chain which drives oxidative phosphorylation. The respiratory chain contains 3 multisubunit complexes succinate dehydrogenase (complex II, CII), ubiquinol-cytochrome c oxidoreductase (cytochrome b-c1 complex, complex III, CIII) and cytochrome c oxidase (complex IV, CIV), that cooperate to transfer electrons derived from NADH and succinate to molecular oxygen, creating an electrochemical gradient over the inner membrane that drives transmembrane transport and the ATP synthase. Cytochrome c oxidase is the component of the respiratory chain that catalyzes the reduction of oxygen to water. Electrons originating from reduced cytochrome c in the intermembrane space (IMS) are transferred via the dinuclear copper A center (CU(A)) of subunit 2 and heme A of subunit 1 to the active site in subunit 1, a binuclear center (BNC) formed by heme A3 and copper B (CU(B)). The BNC reduces molecular oxygen to 2 water molecules using 4 electrons from cytochrome c in the IMS and 4 protons from the mitochondrial matrix. The sequence is that of Cytochrome c oxidase subunit 4 isoform 1, mitochondrial (COX4I1) from Saimiri sciureus (Common squirrel monkey).